A 100-amino-acid chain; its full sequence is ATP synthase subunit c (100 aa).

The next 2 membrane-spanning stretches (helical) occupy residues 26–46 (FSVVAAGIGLGVAALGGAIGM) and 71–91 (MFIALAMIEAQVIYALVIALI).

It belongs to the ATPase C chain family. F-type ATPases have 2 components, F(1) - the catalytic core - and F(0) - the membrane proton channel. F(1) has five subunits: alpha(3), beta(3), gamma(1), delta(1), epsilon(1). F(0) has three main subunits: a(1), b(2) and c(10-14). The alpha and beta chains form an alternating ring which encloses part of the gamma chain. F(1) is attached to F(0) by a central stalk formed by the gamma and epsilon chains, while a peripheral stalk is formed by the delta and b chains.

It localises to the cell inner membrane. F(1)F(0) ATP synthase produces ATP from ADP in the presence of a proton or sodium gradient. F-type ATPases consist of two structural domains, F(1) containing the extramembraneous catalytic core and F(0) containing the membrane proton channel, linked together by a central stalk and a peripheral stalk. During catalysis, ATP synthesis in the catalytic domain of F(1) is coupled via a rotary mechanism of the central stalk subunits to proton translocation. Its function is as follows. Key component of the F(0) channel; it plays a direct role in translocation across the membrane. A homomeric c-ring of between 10-14 subunits forms the central stalk rotor element with the F(1) delta and epsilon subunits. This Campylobacter fetus subsp. fetus (strain 82-40) protein is ATP synthase subunit c.